A 442-amino-acid chain; its full sequence is MATVTRFAPSPTGKLHVGNVRTALHNWLLAKKTGGRFLLRIDDTDAERSREEYVESIRADLQWLGLIPDGEERQSLRTELYEREFQRLVEAGRIYRAYETAQELDLKRKILLGRGLPPIYDRAALKLTEADHAAKAAAGERPHWRFLLDHDQPITWDDGIRGPQSFDPRQMSDPVIRRADGSWLYMLPSAIDDIAMGITDVLRGEDHVSNTATQIQMFTALGAEPPRFAHEALLTGSEGKLSKRLGALGMADFREQGIEPEAIVALLARLGTSDPVDAALDAAALATSFDLSRFGRAPARFDEADLHRVNAQIVHRLPYARVAHLLPQGMGEAAWEAIRPNLAHIDEARDWWNVVTGPVTAPTFDDETRAFLAQAAKTAASLDWSADPWRALTATLKDGTGRKGKALFLPLRQALTGHDHGPEMAALLPLIAQDEAVRRLSA.

Residues 9–19 (PSPTGKLHVGN) carry the 'HIGH' region motif. The short motif at 240 to 244 (KLSKR) is the 'KMSKS' region element. Lys243 lines the ATP pocket.

This sequence belongs to the class-I aminoacyl-tRNA synthetase family. Glutamate--tRNA ligase type 1 subfamily. In terms of assembly, monomer.

The protein resides in the cytoplasm. It catalyses the reaction tRNA(Glu) + L-glutamate + ATP = L-glutamyl-tRNA(Glu) + AMP + diphosphate. Catalyzes the attachment of glutamate to tRNA(Glu) in a two-step reaction: glutamate is first activated by ATP to form Glu-AMP and then transferred to the acceptor end of tRNA(Glu). The sequence is that of Glutamate--tRNA ligase 1 from Novosphingobium aromaticivorans (strain ATCC 700278 / DSM 12444 / CCUG 56034 / CIP 105152 / NBRC 16084 / F199).